Consider the following 359-residue polypeptide: C-X-C chemokine receptor type 4 (359 aa).

The segment at 1–23 (MEPISVSIYTSDNYSEEVGSGDY) is important for chemokine binding and signaling. At 1 to 40 (MEPISVSIYTSDNYSEEVGSGDYDSNKEPCFRDENVHFNR) the chain is on the extracellular side. Sulfotyrosine is present on tyrosine 9. N-linked (GlcNAc...) asparagine glycosylation occurs at asparagine 13. The residue at position 14 (tyrosine 14) is a Sulfotyrosine. An O-linked (Xyl...) (chondroitin sulfate) serine glycan is attached at serine 20. Tyrosine 23 is subject to Sulfotyrosine. Cystine bridges form between cysteine 30–cysteine 281 and cysteine 111–cysteine 193. Residues 41 to 65 (IFLPTIYFIIFLTGIVGNGLVILVM) traverse the membrane as a helical segment. Topologically, residues 66 to 79 (GYQKKLRSMTDKYR) are cytoplasmic. A helical transmembrane segment spans residues 80 to 101 (LHLSVADLLFVITLPFWAVDAM). Residues 96–99 (WAVD) form a chemokine binding region. Residues 102 to 112 (ADWYFGKFLCK) lie on the Extracellular side of the membrane. A helical membrane pass occupies residues 113 to 132 (AVHIIYTVNLYSSVLILAFI). The tract at residues 115-119 (HIIYT) is chemokine binding. The Cytoplasmic segment spans residues 133–156 (SLDRYLAIVHATNSQRPRKLLAEK). Positions 135 to 137 (DRY) match the Important for signaling motif. Residues 137–149 (YLAIVHATNSQRP) form an involved in dimerization; when bound to chemokine region. The chain crosses the membrane as a helical span at residues 157–176 (AVYVGVWIPALLLTIPDFIF). At 177-202 (ADVSQGDISQGDDRYICDRLYPDSLW) the chain is on the extracellular side. The chemokine binding, important for signaling stretch occupies residues 193-197 (CDRLY). The tract at residues 198 to 217 (PDSLWMVVFQFQHIMVGLIL) is involved in dimerization. Residues 203–223 (MVVFQFQHIMVGLILPGIVIL) traverse the membrane as a helical segment. The Cytoplasmic portion of the chain corresponds to 224 to 248 (SCYCIIISKLSHSKGHQKRKALKTT). The helical transmembrane segment at 249–268 (VILILAFFACWLPYYVGISI) threads the bilayer. Residues 269 to 289 (DSFILLGVIKQGCDFESIVHK) lie on the Extracellular side of the membrane. The interval 273–275 (LLG) is involved in dimerization. Residues 290–309 (WISITEALAFFHCCLNPILY) traverse the membrane as a helical segment. Residues 310-359 (AFLGAKFKSSAQHALNSMSRGSSLKILSKGKRGGHSSVSTESESSSFHSS) are Cytoplasmic-facing. A phosphoserine mark is found at serine 326 and serine 328. A phosphoserine; by PKC and GRK6 mark is found at serine 331 and serine 332. The tract at residues 335 to 359 (ILSKGKRGGHSSVSTESESSSFHSS) is disordered. Serine 337 carries the post-translational modification Phosphoserine; by GRK6. A Glycyl lysine isopeptide (Lys-Gly) (interchain with G-Cter in ubiquitin) cross-link involves residue lysine 338. Residues 344 to 359 (HSSVSTESESSSFHSS) are compositionally biased toward low complexity. A Phosphoserine; by GRK6 modification is found at serine 346. 2 positions are modified to phosphoserine: serine 355 and serine 358.

This sequence belongs to the G-protein coupled receptor 1 family. Monomer. Can form homodimers. Interacts with CD164. Interacts with ARRB2; the interaction is dependent on the C-terminal phosphorylation of CXCR4 and allows activation of MAPK1 and MAPK3. Interacts with ARR3; the interaction is dependent on the C-terminal phosphorylation of CXCR4 and modulates calcium mobilization. Interacts with RNF113A; the interaction, enhanced by CXCL12, promotes CXCR4 ubiquitination and subsequent degradation. Interacts (via the cytoplasmic C-terminal) with ITCH (via the WW domains I and II); the interaction, enhanced by CXCL12, promotes CXCR4 ubiquitination and leads to its degradation. Interacts with extracellular ubiquitin. Interacts with DBN1; this interaction is enhanced by antigenic stimulation. Following LPS binding, may form a complex with GDF5, HSP90AA1 and HSPA8. Post-translationally, phosphorylated on agonist stimulation. Rapidly phosphorylated on serine and threonine residues in the C-terminal. Phosphorylation at Ser-331 and Ser-332 leads to recruitment of ITCH, ubiquitination and protein degradation. Ubiquitinated after ligand binding, leading to its degradation. Ubiquitinated by ITCH at the cell membrane on agonist stimulation. The ubiquitin-dependent mechanism, endosomal sorting complex required for transport (ESCRT), then targets CXCR4 for lysosomal degradation. This process is dependent also on prior Ser-/Thr-phosphorylation in the C-terminal of CXCR4. Also binding of ARRB1 to STAM negatively regulates CXCR4 sorting to lysosomes though modulating ubiquitination of SFR5S. In terms of processing, sulfation is required for efficient binding of CXCL12/SDF-1alpha and promotes its dimerization. Post-translationally, O- and N-glycosylated. N-glycosylation can mask coreceptor function. The O-glycosylation chondroitin sulfate attachment does not affect interaction with CXCL12/SDF-1alpha nor its coreceptor activity. As to expression, lymphocytes, macrophages, neutrophils, microglial cells and astrocytes. Found in spleen, thymus, bone marrow, lymph nodes and, at lower levels in brain, small intestine, stomach and kidney. CXCR4-A is predominant in all tissues tested. During embryonic development, high levels are detected in the endothelium of developing blood vessels and in many regions of the developing brain including the olfactory epithelium, olfactory bulb, hippocampus, cerebellum and spinal cord.

The protein resides in the cell membrane. It localises to the cell junction. The protein localises to the early endosome. Its subcellular location is the late endosome. It is found in the lysosome. Its function is as follows. Receptor for the C-X-C chemokine CXCL12/SDF-1 that transduces a signal by increasing intracellular calcium ion levels and enhancing MAPK1/MAPK3 activation. Involved in the AKT signaling cascade. Plays a role in regulation of cell migration, e.g. during wound healing. Acts as a receptor for extracellular ubiquitin; leading to enhanced intracellular calcium ions and reduced cellular cAMP levels. Binds bacterial lipopolysaccharide (LPS) et mediates LPS-induced inflammatory response, including TNF secretion by monocytes. Involved in hematopoiesis and in cardiac ventricular septum formation. Also plays an essential role in vascularization of the gastrointestinal tract, probably by regulating vascular branching and/or remodeling processes in endothelial cells. Involved in cerebellar development. In the CNS, could mediate hippocampal-neuron survival. The chain is C-X-C chemokine receptor type 4 (Cxcr4) from Mus musculus (Mouse).